The primary structure comprises 415 residues: Thylakoid ADP,ATP carrier protein, chloroplastic (415 aa).

A chloroplast-targeting transit peptide spans Met-1 to Arg-61. The next 5 membrane-spanning stretches (helical) occupy residues Ile-106–Gly-126, Leu-182–Arg-207, Leu-219–Leu-239, Gly-273–Val-293, and Leu-309–Ile-329. Solcar repeat units follow at residues Pro-113–Leu-205, Leu-213–Ser-296, and Ser-307–Leu-387. Arg-187 serves as a coordination point for ADP. Position 330 (Arg-330) interacts with ADP. The helical transmembrane segment at Gly-362 to Ile-388 threads the bilayer.

It belongs to the mitochondrial carrier (TC 2.A.29) family. Highly expressed in developing photosynthetic organs such as leaves, flower buds and green siliques. Also detected in roots, flowers, mature leaves and stems.

The protein localises to the plastid. It localises to the chloroplast thylakoid membrane. The protein resides in the chloroplast envelope. With respect to regulation, KM and Vmax values toward ATP only are increased by m-chlorocarbonyl cyanide phenylhydrazone (CCCP). The corresponding values for ADP are not affected. In terms of biological role, specifically transports adenine nucleotides. Involved in the uptake of ATP into thylakoids in exchange for lumenal ADP. The sequence is that of Thylakoid ADP,ATP carrier protein, chloroplastic (TAAC) from Arabidopsis thaliana (Mouse-ear cress).